The chain runs to 260 residues: Indole-3-glycerol phosphate synthase (260 aa).

The protein belongs to the TrpC family.

It carries out the reaction 1-(2-carboxyphenylamino)-1-deoxy-D-ribulose 5-phosphate + H(+) = (1S,2R)-1-C-(indol-3-yl)glycerol 3-phosphate + CO2 + H2O. It functions in the pathway amino-acid biosynthesis; L-tryptophan biosynthesis; L-tryptophan from chorismate: step 4/5. The chain is Indole-3-glycerol phosphate synthase from Bacteroides thetaiotaomicron (strain ATCC 29148 / DSM 2079 / JCM 5827 / CCUG 10774 / NCTC 10582 / VPI-5482 / E50).